Reading from the N-terminus, the 418-residue chain is Deubiquitinase and deneddylase Dub1 (418 aa).

Polar residues predominate over residues 1–10; the sequence is MLSPTNSISK. A disordered region spans residues 1–23; that stretch reads MLSPTNSISKTAPVPPQDSSKPV. Residues 40–60 traverse the membrane as a helical segment; sequence TALAVLLVVVTLGLILLFYSF. A disordered region spans residues 72-144; the sequence is TRPSTKEQPT…PLPPKAPKPV (73 aa). The segment covering 86–141 has biased composition (pro residues); it reads VPLPSPPLAVPRPSTPPPPVISRPSTPPAPTPAISPPSTPSAPKPSTPPPLPPKAP. Residues His288, Asp305, and Cys358 contribute to the active site.

Belongs to the peptidase C48 family.

Its subcellular location is the secreted. The protein resides in the host cell. The protein localises to the membrane. Its function is as follows. Effector proteins function to alter host cell physiology and promote bacterial survival in host tissues. This protease possesses deubiquitinating and deneddylating activities. This Chlamydia trachomatis serovar B (strain Jali20/OT) protein is Deubiquitinase and deneddylase Dub1 (cdu1).